We begin with the raw amino-acid sequence, 536 residues long: CTP synthase (536 aa).

Residues 1-267 (MSKFVFVTGG…CKETLRCLDL (267 aa)) form an amidoligase domain region. Serine 13 is a CTP binding site. Serine 13 contacts UTP. ATP is bound by residues 14–19 (SIGKGI) and aspartate 71. Positions 71 and 141 each coordinate Mg(2+). CTP contacts are provided by residues 148–150 (DIE), 188–193 (KTKPTQ), and lysine 224. Residues 188–193 (KTKPTQ) and lysine 224 each bind UTP. The region spanning 292-534 (KVALVGKYIE…IKASREKLEQ (243 aa)) is the Glutamine amidotransferase type-1 domain. Residue glycine 354 participates in L-glutamine binding. The active-site Nucleophile; for glutamine hydrolysis is the cysteine 381. Residues 382-385 (LGMQ), glutamate 405, and arginine 462 each bind L-glutamine. Catalysis depends on residues histidine 507 and glutamate 509.

Belongs to the CTP synthase family. As to quaternary structure, homotetramer.

It carries out the reaction UTP + L-glutamine + ATP + H2O = CTP + L-glutamate + ADP + phosphate + 2 H(+). The enzyme catalyses L-glutamine + H2O = L-glutamate + NH4(+). It catalyses the reaction UTP + NH4(+) + ATP = CTP + ADP + phosphate + 2 H(+). The protein operates within pyrimidine metabolism; CTP biosynthesis via de novo pathway; CTP from UDP: step 2/2. With respect to regulation, allosterically activated by GTP, when glutamine is the substrate; GTP has no effect on the reaction when ammonia is the substrate. The allosteric effector GTP functions by stabilizing the protein conformation that binds the tetrahedral intermediate(s) formed during glutamine hydrolysis. Inhibited by the product CTP, via allosteric rather than competitive inhibition. Its function is as follows. Catalyzes the ATP-dependent amination of UTP to CTP with either L-glutamine or ammonia as the source of nitrogen. Regulates intracellular CTP levels through interactions with the four ribonucleotide triphosphates. This is CTP synthase from Prochlorococcus marinus (strain MIT 9515).